Consider the following 364-residue polypeptide: Ribosomal RNA large subunit methyltransferase M (364 aa).

Residues serine 194, 227–230 (CPGG), aspartate 246, aspartate 266, and aspartate 284 contribute to the S-adenosyl-L-methionine site. Lysine 313 (proton acceptor) is an active-site residue.

The protein belongs to the class I-like SAM-binding methyltransferase superfamily. RNA methyltransferase RlmE family. RlmM subfamily. In terms of assembly, monomer.

It localises to the cytoplasm. The catalysed reaction is cytidine(2498) in 23S rRNA + S-adenosyl-L-methionine = 2'-O-methylcytidine(2498) in 23S rRNA + S-adenosyl-L-homocysteine + H(+). Catalyzes the 2'-O-methylation at nucleotide C2498 in 23S rRNA. This is Ribosomal RNA large subunit methyltransferase M from Actinobacillus succinogenes (strain ATCC 55618 / DSM 22257 / CCUG 43843 / 130Z).